The sequence spans 136 residues: Large ribosomal subunit protein uL16 (136 aa).

The protein belongs to the universal ribosomal protein uL16 family. In terms of assembly, part of the 50S ribosomal subunit.

In terms of biological role, binds 23S rRNA and is also seen to make contacts with the A and possibly P site tRNAs. The sequence is that of Large ribosomal subunit protein uL16 from Rickettsia bellii (strain OSU 85-389).